A 206-amino-acid polypeptide reads, in one-letter code: Large ribosomal subunit protein uL4 (206 aa).

This sequence belongs to the universal ribosomal protein uL4 family. In terms of assembly, part of the 50S ribosomal subunit.

One of the primary rRNA binding proteins, this protein initially binds near the 5'-end of the 23S rRNA. It is important during the early stages of 50S assembly. It makes multiple contacts with different domains of the 23S rRNA in the assembled 50S subunit and ribosome. Its function is as follows. Forms part of the polypeptide exit tunnel. The sequence is that of Large ribosomal subunit protein uL4 from Rhodopseudomonas palustris (strain BisB18).